The primary structure comprises 247 residues: PsbP domain-containing protein 3, chloroplastic (247 aa).

The transit peptide at 1–26 directs the protein to the chloroplast; sequence MAAISPWLSSPQSFSNPRVTITDSRR. Residues 27–80 constitute a thylakoid transit peptide; sequence CSSISAAISVLDSSNEEQHRISSRDHVGMKRRDVMLQIASSVFFLPLAISPAFA.

Belongs to the PsbP family.

Its subcellular location is the plastid. The protein localises to the chloroplast thylakoid lumen. This Arabidopsis thaliana (Mouse-ear cress) protein is PsbP domain-containing protein 3, chloroplastic (PPD3).